The primary structure comprises 524 residues: Portal protein (524 aa).

Residues 486–516 adopt a coiled-coil conformation; it reads AMKDILQMTDEEIEQEAKQIEEESKEARFQD. A compositionally biased stretch (basic and acidic residues) spans 500-516; sequence QEAKQIEEESKEARFQD. The disordered stretch occupies residues 500–524; sequence QEAKQIEEESKEARFQDPDQEQEDF.

The protein belongs to the Tevenvirinae portal protein family. Homododecamer. Interacts with the large terminase subunit. Interacts with the major capsid protein. Interacts with the capsid vertex protein.

The protein localises to the virion. Its subcellular location is the host cell inner membrane. Its function is as follows. Forms the portal vertex of the capsid. This portal plays critical roles in head assembly, genome packaging, neck/tail attachment, and genome ejection. The portal protein multimerizes as a single ring-shaped homododecamer arranged around a central channel. Binds to the terminase subunits to form the packaging machine. Attaches to the host inner membrane most likely through interaction with host yidC and forms together with chaperone gp40 an initiator complex to form the prohead. This Enterobacteria phage T4 (Bacteriophage T4) protein is Portal protein (20).